The primary structure comprises 437 residues: Glutamate-1-semialdehyde 2,1-aminomutase 1 (437 aa).

At lysine 268 the chain carries N6-(pyridoxal phosphate)lysine.

This sequence belongs to the class-III pyridoxal-phosphate-dependent aminotransferase family. HemL subfamily. Homodimer. Pyridoxal 5'-phosphate serves as cofactor.

Its subcellular location is the cytoplasm. The catalysed reaction is (S)-4-amino-5-oxopentanoate = 5-aminolevulinate. It functions in the pathway porphyrin-containing compound metabolism; protoporphyrin-IX biosynthesis; 5-aminolevulinate from L-glutamyl-tRNA(Glu): step 2/2. The polypeptide is Glutamate-1-semialdehyde 2,1-aminomutase 1 (Halalkalibacterium halodurans (strain ATCC BAA-125 / DSM 18197 / FERM 7344 / JCM 9153 / C-125) (Bacillus halodurans)).